Here is a 400-residue protein sequence, read N- to C-terminus: Cysteine desulfurase (400 aa).

Residues 72–73 (GT), Asn152, Gln180, and 200–202 (SGH) contribute to the pyridoxal 5'-phosphate site. N6-(pyridoxal phosphate)lysine is present on Lys203. Residue Thr238 participates in pyridoxal 5'-phosphate binding. Catalysis depends on Cys326, which acts as the Cysteine persulfide intermediate. Residue Cys326 participates in [2Fe-2S] cluster binding.

The protein belongs to the class-V pyridoxal-phosphate-dependent aminotransferase family. NifS/IscS subfamily. In terms of assembly, homodimer. Requires pyridoxal 5'-phosphate as cofactor.

It carries out the reaction (sulfur carrier)-H + L-cysteine = (sulfur carrier)-SH + L-alanine. In terms of biological role, catalyzes the removal of elemental sulfur atoms from cysteine to produce alanine. Seems to participate in the biosynthesis of the nitrogenase metalloclusters by providing the inorganic sulfur required for the Fe-S core formation. In Gluconacetobacter diazotrophicus (strain ATCC 49037 / DSM 5601 / CCUG 37298 / CIP 103539 / LMG 7603 / PAl5), this protein is Cysteine desulfurase.